The following is a 131-amino-acid chain: Translation initiation factor 5A (131 aa).

Residue Lys-36 is modified to Hypusine.

This sequence belongs to the eIF-5A family. Post-translationally, the N-terminus is blocked.

The protein localises to the cytoplasm. Functions by promoting the formation of the first peptide bond. The sequence is that of Translation initiation factor 5A (eif5a) from Sulfolobus acidocaldarius (strain ATCC 33909 / DSM 639 / JCM 8929 / NBRC 15157 / NCIMB 11770).